The chain runs to 356 residues: Tyrosine recombinase XerS (356 aa).

The Core-binding (CB) domain maps to isoleucine 16–threonine 121. Positions glutamate 169–aspartate 354 constitute a Tyr recombinase domain. Residues arginine 210, lysine 234, histidine 306, arginine 309, and histidine 332 contribute to the active site. The active-site O-(3'-phospho-DNA)-tyrosine intermediate is tyrosine 341.

It belongs to the 'phage' integrase family. XerS subfamily.

The protein localises to the cytoplasm. With respect to regulation, ftsK is required for recombination. Functionally, site-specific tyrosine recombinase, which acts by catalyzing the cutting and rejoining of the recombining DNA molecules. Essential to convert dimers of the bacterial chromosome into monomers to permit their segregation at cell division. This is Tyrosine recombinase XerS from Streptococcus uberis (strain ATCC BAA-854 / 0140J).